We begin with the raw amino-acid sequence, 363 residues long: Histidinol-phosphate aminotransferase (363 aa).

Lys227 is modified (N6-(pyridoxal phosphate)lysine).

This sequence belongs to the class-II pyridoxal-phosphate-dependent aminotransferase family. Histidinol-phosphate aminotransferase subfamily. As to quaternary structure, homodimer. It depends on pyridoxal 5'-phosphate as a cofactor.

It carries out the reaction L-histidinol phosphate + 2-oxoglutarate = 3-(imidazol-4-yl)-2-oxopropyl phosphate + L-glutamate. It participates in amino-acid biosynthesis; L-histidine biosynthesis; L-histidine from 5-phospho-alpha-D-ribose 1-diphosphate: step 7/9. The chain is Histidinol-phosphate aminotransferase from Akkermansia muciniphila (strain ATCC BAA-835 / DSM 22959 / JCM 33894 / BCRC 81048 / CCUG 64013 / CIP 107961 / Muc).